The chain runs to 251 residues: tRNA pseudouridine synthase A (251 aa).

Residue D53 is the Nucleophile of the active site. Substrate is bound at residue Y110.

This sequence belongs to the tRNA pseudouridine synthase TruA family. As to quaternary structure, homodimer.

It carries out the reaction uridine(38/39/40) in tRNA = pseudouridine(38/39/40) in tRNA. Functionally, formation of pseudouridine at positions 38, 39 and 40 in the anticodon stem and loop of transfer RNAs. The protein is tRNA pseudouridine synthase A of Mesoplasma florum (strain ATCC 33453 / NBRC 100688 / NCTC 11704 / L1) (Acholeplasma florum).